We begin with the raw amino-acid sequence, 128 residues long: Ribosome-binding factor A (128 aa).

It belongs to the RbfA family. In terms of assembly, monomer. Binds 30S ribosomal subunits, but not 50S ribosomal subunits or 70S ribosomes.

It localises to the cytoplasm. Functionally, one of several proteins that assist in the late maturation steps of the functional core of the 30S ribosomal subunit. Associates with free 30S ribosomal subunits (but not with 30S subunits that are part of 70S ribosomes or polysomes). Required for efficient processing of 16S rRNA. May interact with the 5'-terminal helix region of 16S rRNA. This is Ribosome-binding factor A from Pseudomonas paraeruginosa (strain DSM 24068 / PA7) (Pseudomonas aeruginosa (strain PA7)).